We begin with the raw amino-acid sequence, 916 residues long: Isoleucine--tRNA ligase (916 aa).

The 'HIGH' region motif lies at 57–67; that stretch reads PYANGNLHMGH. An L-isoleucyl-5'-AMP-binding site is contributed by Glu554. The 'KMSKS' region signature appears at 595 to 599; that stretch reads KMSKS. ATP is bound at residue Lys598. Zn(2+) contacts are provided by Cys885, Cys888, Cys905, and Cys908.

This sequence belongs to the class-I aminoacyl-tRNA synthetase family. IleS type 1 subfamily. In terms of assembly, monomer. Requires Zn(2+) as cofactor.

The protein localises to the cytoplasm. It catalyses the reaction tRNA(Ile) + L-isoleucine + ATP = L-isoleucyl-tRNA(Ile) + AMP + diphosphate. Functionally, catalyzes the attachment of isoleucine to tRNA(Ile). As IleRS can inadvertently accommodate and process structurally similar amino acids such as valine, to avoid such errors it has two additional distinct tRNA(Ile)-dependent editing activities. One activity is designated as 'pretransfer' editing and involves the hydrolysis of activated Val-AMP. The other activity is designated 'posttransfer' editing and involves deacylation of mischarged Val-tRNA(Ile). This is Isoleucine--tRNA ligase (ileS) from Staphylococcus epidermidis (strain ATCC 35984 / DSM 28319 / BCRC 17069 / CCUG 31568 / BM 3577 / RP62A).